The following is a 153-amino-acid chain: Large ribosomal subunit protein bL9 (153 aa).

It belongs to the bacterial ribosomal protein bL9 family.

Binds to the 23S rRNA. The polypeptide is Large ribosomal subunit protein bL9 (Mycoplasma mycoides subsp. mycoides SC (strain CCUG 32753 / NCTC 10114 / PG1)).